The following is a 367-amino-acid chain: CCN family member 4 (367 aa).

The N-terminal stretch at 1–22 (MRWFLPWTLAAVTAAAASTVLA) is a signal peptide. One can recognise an IGFBP N-terminal domain in the interval 45–118 (RPQFCKWPCE…RYAIGVCAQV (74 aa)). Intrachain disulfides connect Cys-49–Cys-73, Cys-53–Cys-75, Cys-55–Cys-76, and Cys-62–Cys-79. Asn-86 carries an N-linked (GlcNAc...) asparagine glycan. 2 disulfide bridges follow: Cys-87–Cys-101 and Cys-93–Cys-115. The 66-residue stretch at 121 to 186 (VGCVLDGVRY…GHCCEQWVCE (66 aa)) folds into the VWFC domain. N-linked (GlcNAc...) asparagine glycosylation is present at Asn-143. The 46-residue stretch at 215–260 (NCIAYTSPWSPCSTSCGLGVSTRISNVNAQCWPEQESRLCNLRPCD) folds into the TSP type-1 domain. 5 cysteine pairs are disulfide-bonded: Cys-273-Cys-310, Cys-290-Cys-324, Cys-301-Cys-340, Cys-304-Cys-342, and Cys-309-Cys-346. One can recognise a CTCK domain in the interval 273 to 347 (CLAVYQPEAS…NACFCNLSCR (75 aa)). Asn-284 carries an N-linked (GlcNAc...) asparagine glycan. Asn-343 carries an N-linked (GlcNAc...) asparagine glycan.

Belongs to the CCN family. Expressed in heart, kidney, lung, pancreas, placenta, ovary, small intestine and spleen. Isoform 2 is expressed predominantly in scirrhous gastric carcinoma and, weakly in placenta. Overexpression is associated with several cancers including breast cancer and colon tumors. Isoform 2 is overexpressed in scirrhous gastric carcinoma.

The protein localises to the secreted. In terms of biological role, downstream regulator in the Wnt/Frizzled-signaling pathway. Associated with cell survival. Attenuates p53-mediated apoptosis in response to DNA damage through activation of AKT kinase. Up-regulates the anti-apoptotic Bcl-X(L) protein. Adheres to skin and melanoma fibroblasts. In vitro binding to skin fibroblasts occurs through the proteoglycans, decorin and biglycan. This Homo sapiens (Human) protein is CCN family member 4.